Here is a 176-residue protein sequence, read N- to C-terminus: Large ribosomal subunit protein uL6 (176 aa).

Residues 156 to 170 (YKGKGVRYADEQVRR) show a composition bias toward basic and acidic residues. Positions 156-176 (YKGKGVRYADEQVRRKEAKKK) are disordered.

This sequence belongs to the universal ribosomal protein uL6 family. As to quaternary structure, part of the 50S ribosomal subunit.

Functionally, this protein binds to the 23S rRNA, and is important in its secondary structure. It is located near the subunit interface in the base of the L7/L12 stalk, and near the tRNA binding site of the peptidyltransferase center. This chain is Large ribosomal subunit protein uL6, found in Shewanella woodyi (strain ATCC 51908 / MS32).